The primary structure comprises 867 residues: Inactive tyrosine-protein kinase kin-32 (867 aa).

Residues 3 to 327 (GLARVFLIGG…GYQMLYNQRD (325 aa)) form the FERM domain. The region spanning 367-631 (ITLKELIGGG…IIEDVRQQII (265 aa)) is the Protein kinase domain. Residues 373–381 (IGGGQFGNV) and K400 each bind ATP. A coiled-coil region spans residues 662 to 691 (TLYRTMEDQKRQAEEDAKWLEQEDDEDEDD). Residues 674 to 729 (AEEDAKWLEQEDDEDEDDQDIDQIPSTSHSSVENIRTSNGYLHHTPTSTRSLRFED) are disordered. Positions 683-694 (QEDDEDEDDQDI) are enriched in acidic residues. Polar residues predominate over residues 698-724 (PSTSHSSVENIRTSNGYLHHTPTSTRS).

This sequence belongs to the protein kinase superfamily. Tyr protein kinase family. FAK subfamily. Expressed in body wall muscles and some neurons in the head.

Its function is as follows. Has apparently no tyrosine kinase activity in vitro when expressed in mammalian cells. The sequence is that of Inactive tyrosine-protein kinase kin-32 from Caenorhabditis elegans.